The chain runs to 94 residues: MICOS complex subunit MIC12 (94 aa).

Residues 7–23 (YGSFSVVASVLGASYYY) form a helical membrane-spanning segment.

The protein belongs to the MICOS complex subunit Mic12 family. As to quaternary structure, component of the mitochondrial contact site and cristae organizing system (MICOS) complex.

The protein resides in the mitochondrion inner membrane. Its function is as follows. Component of the MICOS complex, a large protein complex of the mitochondrial inner membrane that plays crucial roles in the maintenance of crista junctions, inner membrane architecture, and formation of contact sites to the outer membrane. This is MICOS complex subunit MIC12 (AIM5) from Eremothecium gossypii (strain ATCC 10895 / CBS 109.51 / FGSC 9923 / NRRL Y-1056) (Yeast).